A 387-amino-acid polypeptide reads, in one-letter code: S-adenosylmethionine synthase (387 aa).

His15 provides a ligand contact to ATP. Position 17 (Asp17) interacts with Mg(2+). A K(+)-binding site is contributed by Glu43. Residues Glu56 and Gln99 each contribute to the L-methionine site. The interval 99-109 (QSPDIALGVNR) is flexible loop. Residues 166–168 (DAK), 232–233 (RF), Asp241, 247–248 (RK), Ala264, and Lys268 each bind ATP. Asp241 serves as a coordination point for L-methionine. Lys272 is a binding site for L-methionine.

This sequence belongs to the AdoMet synthase family. Homotetramer; dimer of dimers. It depends on Mg(2+) as a cofactor. K(+) is required as a cofactor.

The protein resides in the cytoplasm. It carries out the reaction L-methionine + ATP + H2O = S-adenosyl-L-methionine + phosphate + diphosphate. The protein operates within amino-acid biosynthesis; S-adenosyl-L-methionine biosynthesis; S-adenosyl-L-methionine from L-methionine: step 1/1. Functionally, catalyzes the formation of S-adenosylmethionine (AdoMet) from methionine and ATP. The overall synthetic reaction is composed of two sequential steps, AdoMet formation and the subsequent tripolyphosphate hydrolysis which occurs prior to release of AdoMet from the enzyme. In Nitrosomonas eutropha (strain DSM 101675 / C91 / Nm57), this protein is S-adenosylmethionine synthase.